A 331-amino-acid chain; its full sequence is Ribonuclease Z (331 aa).

Zn(2+) contacts are provided by H56, H58, D60, H61, H162, D235, and H297. D60 functions as the Proton acceptor in the catalytic mechanism.

Belongs to the RNase Z family. As to quaternary structure, homodimer. The cofactor is Zn(2+).

The enzyme catalyses Endonucleolytic cleavage of RNA, removing extra 3' nucleotides from tRNA precursor, generating 3' termini of tRNAs. A 3'-hydroxy group is left at the tRNA terminus and a 5'-phosphoryl group is left at the trailer molecule.. In terms of biological role, zinc phosphodiesterase, which displays some tRNA 3'-processing endonuclease activity. Probably involved in tRNA maturation, by removing a 3'-trailer from precursor tRNA. The protein is Ribonuclease Z (rnz) of Deinococcus radiodurans (strain ATCC 13939 / DSM 20539 / JCM 16871 / CCUG 27074 / LMG 4051 / NBRC 15346 / NCIMB 9279 / VKM B-1422 / R1).